We begin with the raw amino-acid sequence, 287 residues long: ATP synthase subunit a (287 aa).

The next 6 membrane-spanning stretches (helical) occupy residues 38–58 (DSMV…WTAA), 96–116 (FIAP…AMDM), 139–161 (VVPT…LRFW), 187–207 (PLFA…EYVA), 225–245 (LVFM…SGVL), and 259–279 (LFHI…ALIY).

This sequence belongs to the ATPase A chain family. In terms of assembly, F-type ATPases have 2 components, CF(1) - the catalytic core - and CF(0) - the membrane proton channel. CF(1) has five subunits: alpha(3), beta(3), gamma(1), delta(1), epsilon(1). CF(0) has three main subunits: a(1), b(2) and c(9-12). The alpha and beta chains form an alternating ring which encloses part of the gamma chain. CF(1) is attached to CF(0) by a central stalk formed by the gamma and epsilon chains, while a peripheral stalk is formed by the delta and b chains.

It localises to the cell inner membrane. Functionally, key component of the proton channel; it plays a direct role in the translocation of protons across the membrane. The sequence is that of ATP synthase subunit a from Verminephrobacter eiseniae (strain EF01-2).